The following is a 486-amino-acid chain: Lipase 1 (486 aa).

Cys58 and Cys82 form a disulfide bridge. The active-site Acyl-ester intermediate is Ser193. Asp303 (charge relay system) is an active-site residue. Residue Asn332 is glycosylated (N-linked (GlcNAc...) asparagine). His392 (charge relay system) is an active-site residue.

Belongs to the type-B carboxylesterase/lipase family.

It catalyses the reaction a triacylglycerol + H2O = a diacylglycerol + a fatty acid + H(+). This is Lipase 1 (LIP1) from Yarrowia lipolytica (strain CLIB 122 / E 150) (Yeast).